The following is a 565-amino-acid chain: Urease subunit beta (565 aa).

The 436-residue stretch at 130–565 (GGIDTHIHFI…LALARKYFMI (436 aa)) folds into the Urease domain. Positions 135, 137, and 218 each coordinate Ni(2+). Position 218 is an N6-carboxylysine (Lys218). A substrate-binding site is contributed by His220. Residues His247 and His273 each coordinate Ni(2+). His321 acts as the Proton donor in catalysis. Ni(2+) is bound at residue Asp361.

It belongs to the metallo-dependent hydrolases superfamily. Urease alpha subunit family. As to quaternary structure, heterohexamer of 3 UreA (alpha) and 3 UreB (beta) subunits. Ni cation serves as cofactor. In terms of processing, carboxylation allows a single lysine to coordinate two nickel ions.

The protein localises to the cytoplasm. It carries out the reaction urea + 2 H2O + H(+) = hydrogencarbonate + 2 NH4(+). Its pathway is nitrogen metabolism; urea degradation; CO(2) and NH(3) from urea (urease route): step 1/1. In Campylobacter lari, this protein is Urease subunit beta.